Here is a 458-residue protein sequence, read N- to C-terminus: Argininosuccinate lyase (458 aa).

This sequence belongs to the lyase 1 family. Argininosuccinate lyase subfamily.

The protein resides in the cytoplasm. The catalysed reaction is 2-(N(omega)-L-arginino)succinate = fumarate + L-arginine. It participates in amino-acid biosynthesis; L-arginine biosynthesis; L-arginine from L-ornithine and carbamoyl phosphate: step 3/3. The chain is Argininosuccinate lyase from Salmonella typhi.